The primary structure comprises 202 residues: Ribonuclease HII (202 aa).

The region spanning 15-202 (QGVAGVDEAG…APIKAFGISA (188 aa)) is the RNase H type-2 domain. 3 residues coordinate a divalent metal cation: Asp-21, Glu-22, and Asp-113.

The protein belongs to the RNase HII family. Mn(2+) serves as cofactor. Mg(2+) is required as a cofactor.

The protein localises to the cytoplasm. It carries out the reaction Endonucleolytic cleavage to 5'-phosphomonoester.. Its function is as follows. Endonuclease that specifically degrades the RNA of RNA-DNA hybrids. In Bordetella avium (strain 197N), this protein is Ribonuclease HII.